A 275-amino-acid chain; its full sequence is MGMSAISTETLSLGYGDAVIIDELNLTIPKGEITVFIGSNGCGKSTLLRSLARLMKPRGGSVLLEGRAIAKLPTKEVAKELAILPQGPSAPEGLTVHQLVKQGRYPYQNWLKQWSKEDEEAVERALKATKLEDMADRAVDSLSGGQRQRAWIAMTLAQETDIILLDEPTTYLDMTHQIEILDLLFELNEKEDRTIVMVLHDLNLACRYAHHLVAIKDKRIYAEGRPEEVITCDLVQNVFSMNCQVTQDPLFGTPLCIPHGRGRCIVQEAAFTSHG.

Residues 6–242 form the ABC transporter domain; the sequence is ISTETLSLGY…DLVQNVFSMN (237 aa). Residue 38 to 45 coordinates ATP; it reads GSNGCGKS.

This sequence belongs to the ABC transporter superfamily. As to quaternary structure, the iron-hydroxamate siderophore complex is composed of one ATP-binding protein (YusV), two transmembrane proteins (YfiZ and YfhA) and a solute-binding protein (YfiY); the catechoplate siderophore complex is composed of one ATP-binding protein (YusV), two transmembrane proteins (FeuB and FeuC) and a solute-binding protein (FeuA).

It is found in the cell membrane. Provides the ATPase subunit for at least 2 ABC transporter complexes; YfiYZ/YfhA/YusV involved in import of the iron-hydroxamate siderophores schizokinen, arthrobactin and corprogen, and FeuABC/YusV involved in import of the catecholate siderophores bacillibactin and enterobactin. Probably responsible for energy coupling to the transport system. This is Probable siderophore transport system ATP-binding protein YusV (yusV) from Bacillus subtilis (strain 168).